A 281-amino-acid chain; its full sequence is Ribosomal RNA small subunit methyltransferase A (281 aa).

6 residues coordinate S-adenosyl-L-methionine: asparagine 36, leucine 38, glycine 63, glutamate 84, aspartate 109, and asparagine 127.

Belongs to the class I-like SAM-binding methyltransferase superfamily. rRNA adenine N(6)-methyltransferase family. RsmA subfamily.

The protein localises to the cytoplasm. The catalysed reaction is adenosine(1518)/adenosine(1519) in 16S rRNA + 4 S-adenosyl-L-methionine = N(6)-dimethyladenosine(1518)/N(6)-dimethyladenosine(1519) in 16S rRNA + 4 S-adenosyl-L-homocysteine + 4 H(+). In terms of biological role, specifically dimethylates two adjacent adenosines (A1518 and A1519) in the loop of a conserved hairpin near the 3'-end of 16S rRNA in the 30S particle. May play a critical role in biogenesis of 30S subunits. The polypeptide is Ribosomal RNA small subunit methyltransferase A (Borreliella burgdorferi (strain ATCC 35210 / DSM 4680 / CIP 102532 / B31) (Borrelia burgdorferi)).